The chain runs to 277 residues: MPELPEVETVRRSLAGRITGLTIEKVELRLPKIAFALPGTLFTDALRGRRIIELGRRGKYLLLHLDGDETLVIHLRMTGRLIHLRPEEREEPEAAHTHAVFFLDDGSLLRYTDVRQFGTLTLMTREAALRQPGKGRLGPEPLGQDFSFVDFRNALVKRKTKLKPLLLDQSFLAGLGNIYADEALARARLHPDRTADSLDDEESRRLYDCIRTVLQEGIDAKGTSFRDYVDGEGRKGEFQEKLWVYGRGGNPCRRCGGEILREKRAGRSTHFCPRCQK.

Proline 2 functions as the Schiff-base intermediate with DNA in the catalytic mechanism. Residue glutamate 3 is the Proton donor of the active site. Lysine 59 functions as the Proton donor; for beta-elimination activity in the catalytic mechanism. DNA contacts are provided by histidine 96, arginine 115, and arginine 158. An FPG-type zinc finger spans residues 243–277 (WVYGRGGNPCRRCGGEILREKRAGRSTHFCPRCQK). Arginine 267 (proton donor; for delta-elimination activity) is an active-site residue.

Belongs to the FPG family. In terms of assembly, monomer. Zn(2+) is required as a cofactor.

The enzyme catalyses Hydrolysis of DNA containing ring-opened 7-methylguanine residues, releasing 2,6-diamino-4-hydroxy-5-(N-methyl)formamidopyrimidine.. It carries out the reaction 2'-deoxyribonucleotide-(2'-deoxyribose 5'-phosphate)-2'-deoxyribonucleotide-DNA = a 3'-end 2'-deoxyribonucleotide-(2,3-dehydro-2,3-deoxyribose 5'-phosphate)-DNA + a 5'-end 5'-phospho-2'-deoxyribonucleoside-DNA + H(+). Its function is as follows. Involved in base excision repair of DNA damaged by oxidation or by mutagenic agents. Acts as a DNA glycosylase that recognizes and removes damaged bases. Has a preference for oxidized purines, such as 7,8-dihydro-8-oxoguanine (8-oxoG). Has AP (apurinic/apyrimidinic) lyase activity and introduces nicks in the DNA strand. Cleaves the DNA backbone by beta-delta elimination to generate a single-strand break at the site of the removed base with both 3'- and 5'-phosphates. This is Formamidopyrimidine-DNA glycosylase from Heliobacterium modesticaldum (strain ATCC 51547 / Ice1).